A 535-amino-acid chain; its full sequence is MVKKVAVIGAGVSGLISLKGCVDEGLEPTCFERTEDIGGLWRFKENVEDGRASIYHSVITNTSKEMSCFSDFPMPEDFPNFLHNSKLLEYFRIFAKKFDLLKYIQFQTTVISVKKRPDFASSGQWDVYVQSNGKEQRAVFDAVMVCSGHHIQPHLPLKSFPGIERFQGQYFHSRQYKHPVGYEGKRILVVGIGNSAADIASELSKRAAQVFVSTRHGSWVLSRISEDGYPWDMVFHTRFSSMLRNVLPRTVVKWMMERQMNRWFNHENYGLVPQNKYLMKEPVLNDDLPSRLLYGAIKVKTRVKELTETAVVFEDGTVEEDVDVIVFATGYTFSFPFLEDSLVKVEDNKVSLYKAMFPPHLEKPTLACIGLIQPLGSIFPTVELQARWATRVFKGVCRLPSETTMMADIAERNEKRIDLFGKSQSQILQTNYIDYLDELALEIGAKPDFISLLFKDPKLAVKLYFGPCNSYQYRLVGPGQWEGARNAILTQKQRILKPLKTRTLQTSASAPVSFLIKVLGLLAIVLAFFFKLHGF.

FAD is bound by residues 9 to 13 (GAGVS), Glu-32, 40 to 41 (LW), and 61 to 62 (NT). Residues 60–61 (TN) and 195–198 (SAAD) each bind NADP(+). Lys-492 is covalently cross-linked (Glycyl lysine isopeptide (Lys-Gly) (interchain with G-Cter in SUMO)). A helical membrane pass occupies residues 510–530 (APVSFLIKVLGLLAIVLAFFF).

The protein belongs to the FMO family. Requires FAD as cofactor. Mg(2+) is required as a cofactor.

Its subcellular location is the microsome membrane. It is found in the endoplasmic reticulum membrane. Its function is as follows. Catalyzes the oxidative metabolism of numerous xenobiotics, including mainly therapeutic drugs and insecticides that contain a soft nucleophile, most commonly nitrogen and sulfur and participates to their bioactivation. This is Dimethylaniline monooxygenase [N-oxide-forming] 2 from Rattus norvegicus (Rat).